Consider the following 559-residue polypeptide: Nucleolar protein 12 (559 aa).

Residues 24–194 (ASSAGPVQAP…AGNESDIPVH (171 aa)) are disordered. Positions 44-56 (QKVREPAKPKVHL) are enriched in basic and acidic residues. Positions 57-110 (EEDDEVLSEISEELSFEEDGPSDEDEDEDEDEENSEQEDGSGDEQEEEESEDVD) are enriched in acidic residues. A compositionally biased stretch (basic and acidic residues) spans 141–180 (NDNDDLEGKYLDKVAAEEEADRAGKRQKNDALTKTEKPAV). RRM domains follow at residues 211–320 (RTVF…SVAH) and 328–432 (RCVF…RAKD). Positions 429–559 (RAKDPRKTAL…RASEWKKKKN (131 aa)) are disordered. Composition is skewed to basic and acidic residues over residues 516–532 (EGRRASARDGLPKDLKQ) and 550–559 (RASEWKKKKN).

Belongs to the RRM RBM34 family.

The protein localises to the nucleus. It localises to the nucleolus. In terms of biological role, involved in pre-25S rRNA processing. This Gibberella zeae (strain ATCC MYA-4620 / CBS 123657 / FGSC 9075 / NRRL 31084 / PH-1) (Wheat head blight fungus) protein is Nucleolar protein 12 (NOP12).